Here is a 723-residue protein sequence, read N- to C-terminus: Cyclin-T2 (723 aa).

The segment at 1–298 is interaction with MDFIC and MDFI; sequence MASGRGASSR…SVTGVPANPS (298 aa). Positions 12-147 constitute a Cyclin N-terminal domain; it reads FFTREQLENT…IMLQTLGFEI (136 aa). Residues 250–298 are interaction with POLR2A; the sequence is RLKRIRNWRAMAKKPKVDGQVSETPLLGSSLVQNSILVDSVTGVPANPS. Composition is skewed to polar residues over residues 297–307 and 314–325; these read PSFQKPSTSTF and NSGSTSVQDSRA. 4 disordered regions span residues 297 to 325, 340 to 364, 385 to 428, and 458 to 645; these read PSFQKPSTSTFPAPIPLNSGSTSVQDSRA, SYSLSSHQEWPQHPDSARTDPVYTQ, ALHS…GMLP, and AEQQ…SSVK. Basic and acidic residues predominate over residues 395 to 409; that stretch reads DKVADHSSAKQEYTH. A Glycyl lysine isopeptide (Lys-Gly) (interchain with G-Cter in SUMO2) cross-link involves residue K404. S477 carries the post-translational modification Phosphoserine. Composition is skewed to basic and acidic residues over residues 489-503, 517-543, and 552-565; these read DRPEKHVAEKKERSG, GPSKEELKMKIKVASSERHSSSDEGSG, and ISRDHKEKHKEHPA. Basic residues predominate over residues 566-576; sequence NRHHSSHKYLH. S596 is modified (phosphoserine). Low complexity predominate over residues 631–645; that stretch reads SSKSAGSSSSSSSVK.

The protein belongs to the cyclin family. Cyclin C subfamily. As to quaternary structure, interacts with CDK9 to form P-TEFb. Interacts with POLR2A (via the C-terminal domain (CTD)); mediates transcriptional activity. Interacts with HEXIM1; mediates formation of a tripartite complex with KPNA2. Interacts with HEXIM2. Interacts with PKN1; enhances MYOD1-dependent transcription. P-TEFB complex interacts with RB1; promotes phosphorylation of RB1. P-TEFB complex interacts with MYOD1; promotes the transcriptional activity of MYOD1 through its CDK9-mediated phosphorylation. Interacts with MDFI and MDFIC. Highly expressed in all phases of skeletal muscle differentiation, particularly in later stages. Highly expressed in skeletal muscle. Significantly expressed in heart, brain, kidney, liver, testis, and pancreas.

Its subcellular location is the cytoplasm. The protein resides in the perinuclear region. It is found in the nucleus. In terms of biological role, regulatory subunit of the cyclin-dependent kinase pair (CDK9/cyclin T) complex, also called positive transcription elongation factor B (P-TEFB), which is proposed to facilitate the transition from abortive to production elongation by phosphorylating the CTD (carboxy-terminal domain) of the large subunit of RNA polymerase II (RNAP II). The activity of this complex is regulated by binding with 7SK snRNA. Plays a role during muscle differentiation; P-TEFB complex interacts with MYOD1; this tripartite complex promotes the transcriptional activity of MYOD1 through its CDK9-mediated phosphorylation and binds the chromatin of promoters and enhancers of muscle-specific genes; this event correlates with hyperphosphorylation of the CTD domain of RNA pol II. In addition, enhances MYOD1-dependent transcription through interaction with PKN1. Involved in early embryo development. This is Cyclin-T2 from Mus musculus (Mouse).